The sequence spans 737 residues: MDNTTNINTNERSSNTDFSSAPNIKGLNSHTQLQFDADSRVFVSDAMAKNSKQLLYAHIYNYLIKNNYWNSAAKFLSEADLPLSRINGSASGEKTSLNASLKQGLMDIASKGGIVSEDGLLPSKMLMDANDTFLLEWWEIFQSLFNGDLESGYQQDHNPLRERIIPILPANSKSNMPSHFSNLPPNVIPPTQNSFPVSEESFRPNGDGSNFNLNDPTNRNVSERFLSRTSGVYDKQNSANFTPDTAINSDIAGQQYATINLHKHFNDLQSPAQPQQSSQQQIQQPQRQPQHQQQQQQQQQQQQQQQQQQQQQQQTPYPIVNPQMVPHIPSENSHSTGLMPSVPPTNQQFNAQTQSSMFSDQQRFFQYQLHHQNQGQAPSFQQSQSGRFDDMNAMKMFFQQQALQQNSLQQNLGNQNYQSNTRNNTAEETTPTNDNNANGNSLLQEHIRARFNKMKTIPQQMKNQNTVANPVVSDITSQQQYMHMMMQRMAANQQLQNSAFPPDTNRIAPANNAMPLQPGNMGPPVIENPGMRQTNPSGQNPMINMQPLYQNVSSAMHAFAPQQQFHLPQHYKTNTSVPQNDSTSVFPLPNNNNNNNNNNNNNNNSNNSNNNNNNNNSNNTPTVSQPSSKRTSSSSTTPNITTTIQPKRKQRVGKTKTKESRKVAAAQKVMKSKKLEQNGDSAATNFINVTPKDSGGKGTVKVQNSNSQQQLNGSFSMDTETFDIFNIGDFSPDLMDS.

A disordered region spans residues 1–23 (MDNTTNINTNERSSNTDFSSAPN). One can recognise a LisH domain in the interval 51 to 83 (SKQLLYAHIYNYLIKNNYWNSAAKFLSEADLPL). Disordered stretches follow at residues 191-220 (TQNS…TNRN), 268-347 (LQSP…PTNQ), 413-439 (GNQN…NANG), and 572-660 (KTNT…TKES). Over residues 207–220 (DGSNFNLNDPTNRN) the composition is skewed to polar residues. Over residues 269 to 314 (QSPAQPQQSSQQQIQQPQRQPQHQQQQQQQQQQQQQQQQQQQQQQQ) the composition is skewed to low complexity. Composition is skewed to polar residues over residues 330 to 347 (SENS…PTNQ), 421 to 439 (TRNN…NANG), and 572 to 585 (KTNT…STSV). A compositionally biased stretch (low complexity) spans 590-643 (NNNNNNNNNNNNNNNSNNSNNNNNNNNSNNTPTVSQPSSKRTSSSSTTPNITTT). The segment covering 646-655 (PKRKQRVGKT) has biased composition (basic residues).

The protein belongs to the MSS11 family. Interacts with FLO8, STE12 and TEC1.

The protein resides in the cytoplasm. It localises to the nucleus. Functionally, transcription factor that regulates pseudohyphal differentiation, invasive growth, floculation, adhesion and starch metabolism in response to nutrient availability. This is Transcription activator MSS11 (MSS11) from Saccharomyces cerevisiae (strain YJM789) (Baker's yeast).